The following is a 147-amino-acid chain: Interleukin-4 (147 aa).

Residues 1–19 (MGLRPQLAAILLCLLACTG) form the signal peptide. 4 N-linked (GlcNAc...) asparagine glycosylation sites follow: asparagine 20, asparagine 61, asparagine 90, and asparagine 117. Disulfide bonds link cysteine 47–cysteine 87 and cysteine 69–cysteine 114.

This sequence belongs to the IL-4/IL-13 family.

It localises to the secreted. Its function is as follows. Participates in at least several B-cell activation processes as well as of other cell types. It is a costimulator of DNA-synthesis. It induces the expression of class II MHC molecules on resting B-cells. It enhances both secretion and cell surface expression of IgE and IgG1. It also regulates the expression of the low affinity Fc receptor for IgE (CD23) on both lymphocytes and monocytes. Positively regulates IL31RA expression in macrophages. Stimulates autophagy in dendritic cells by interfering with mTORC1 signaling and through the induction of RUFY4. The protein is Interleukin-4 (IL4) of Mesocricetus auratus (Golden hamster).